A 161-amino-acid chain; its full sequence is Putative outer membrane protein YedS (161 aa).

Positions 1-21 (MKRKVLAMLVPALLVAGAANA) are cleaved as a signal peptide.

Belongs to the Gram-negative porin family.

The protein localises to the cell outer membrane. The sequence is that of Putative outer membrane protein YedS (yedS) from Escherichia coli (strain K12).